The following is a 134-amino-acid chain: Protein dpy-30 homolog (134 aa).

Residues 1-81 (MEAKTDAPIS…ETNNMPTRQY (81 aa)) form a disordered region. The span at 31–68 (AQANPTAAPGAPPSGAIAVGQSTNPVAQQQQQPAVAKK) shows a compositional bias: low complexity. The segment covering 71-81 (SETNNMPTRQY) has biased composition (polar residues).

The protein belongs to the dpy-30 family. In terms of assembly, core component of several methyltransferase-containing complexes. Component of the SET1 complex, composed at least of the catalytic subunit Set1, wds/WDR5, Wdr82, Rbbp5, ash2, Cfp1/CXXC1, hcf and Dpy-30L1. Component of the MLL3/4 complex composed at least of the catalytic subunit trr, ash2, Rbbp5, Dpy-30L1, wds, hcf, ptip, Pa1, Utx, Lpt and Ncoa6. In terms of tissue distribution, expressed in larval brain, gonad, imaginal disk and salivary gland and in adult brain, testis, ovary and salivary gland.

The protein localises to the nucleus. Component of the SET1 complex that specifically di- and trimethylates 'Lys-4' of histone H3 and of the MLL3/4 complex which also methylates histone H3 'Lys-4'. Inhibits MTF-1 transcription factor activity. The sequence is that of Protein dpy-30 homolog from Drosophila melanogaster (Fruit fly).